A 256-amino-acid chain; its full sequence is 1-(5-phosphoribosyl)-5-[(5-phosphoribosylamino)methylideneamino] imidazole-4-carboxamide isomerase (256 aa).

The active-site Proton acceptor is Asp-8. Asp-130 functions as the Proton donor in the catalytic mechanism.

It belongs to the HisA/HisF family.

It is found in the cytoplasm. The catalysed reaction is 1-(5-phospho-beta-D-ribosyl)-5-[(5-phospho-beta-D-ribosylamino)methylideneamino]imidazole-4-carboxamide = 5-[(5-phospho-1-deoxy-D-ribulos-1-ylimino)methylamino]-1-(5-phospho-beta-D-ribosyl)imidazole-4-carboxamide. The protein operates within amino-acid biosynthesis; L-histidine biosynthesis; L-histidine from 5-phospho-alpha-D-ribose 1-diphosphate: step 4/9. This chain is 1-(5-phosphoribosyl)-5-[(5-phosphoribosylamino)methylideneamino] imidazole-4-carboxamide isomerase, found in Chlorobium phaeobacteroides (strain DSM 266 / SMG 266 / 2430).